The sequence spans 163 residues: Neurotrophin-3 (163 aa).

Positions 1–3 are cleaved as a signal peptide; sequence IQS. Residues 4–119 constitute a propeptide that is removed on maturation; it reads TSMDQGILTE…ALNRTSRRKR (116 aa). Disordered regions lie at residues 38–60 and 90–131; these read ARTK…ATAS and LLSE…YSVC. N-linked (GlcNAc...) asparagine glycosylation is present at N112.

Belongs to the NGF-beta family.

Its subcellular location is the secreted. In terms of biological role, seems to promote the survival of visceral and proprioceptive sensory neurons. The sequence is that of Neurotrophin-3 (NTF3) from Eunectes notaeus (Yellow anaconda).